A 385-amino-acid chain; its full sequence is tRNA N6-adenosine threonylcarbamoyltransferase (385 aa).

The a divalent metal cation site is built by H140, H144, and Y161. Substrate-binding positions include 161–165 (YVSGG), D193, G208, E212, and N314. D343 serves as a coordination point for a divalent metal cation.

This sequence belongs to the KAE1 / TsaD family. As to quaternary structure, component of the EKC/KEOPS complex composed of at least BUD32, CGI121, GON7, KAE1 and PCC1; the whole complex dimerizes. A divalent metal cation serves as cofactor.

It is found in the cytoplasm. The protein resides in the nucleus. The catalysed reaction is L-threonylcarbamoyladenylate + adenosine(37) in tRNA = N(6)-L-threonylcarbamoyladenosine(37) in tRNA + AMP + H(+). Functionally, component of the EKC/KEOPS complex that is required for the formation of a threonylcarbamoyl group on adenosine at position 37 (t(6)A37) in tRNAs that read codons beginning with adenine. The complex is probably involved in the transfer of the threonylcarbamoyl moiety of threonylcarbamoyl-AMP (TC-AMP) to the N6 group of A37. KAE1 likely plays a direct catalytic role in this reaction, but requires other protein(s) of the complex to fulfill this activity. The EKC/KEOPS complex also promotes both telomere uncapping and telomere elongation. The complex is required for efficient recruitment of transcriptional coactivators. The protein is tRNA N6-adenosine threonylcarbamoyltransferase of Eremothecium gossypii (strain ATCC 10895 / CBS 109.51 / FGSC 9923 / NRRL Y-1056) (Yeast).